The sequence spans 455 residues: Bleomycin hydrolase (455 aa).

The residue at position 1 (M1) is an N-acetylmethionine. Catalysis depends on residues C73 and H372. The residue at position 391 (K391) is an N6-acetyllysine. Residue N396 is part of the active site.

Belongs to the peptidase C1 family. Homohexamer. Interacts with NUDT12 (via ANK repeats).

Its subcellular location is the cytoplasm. The protein resides in the cytoplasmic granule. The catalysed reaction is Inactivates bleomycin B2 (a cytotoxic glycometallopeptide) by hydrolysis of a carboxyamide bond of beta-aminoalanine, but also shows general aminopeptidase activity. The specificity varies somewhat with source, but amino acid arylamides of Met, Leu and Ala are preferred.. In terms of biological role, the normal physiological role of BLM hydrolase is unknown, but it catalyzes the inactivation of the antitumor drug BLM (a glycopeptide) by hydrolyzing the carboxamide bond of its B-aminoalaninamide moiety thus protecting normal and malignant cells from BLM toxicity. In Homo sapiens (Human), this protein is Bleomycin hydrolase (BLMH).